The chain runs to 206 residues: Small ribosomal subunit protein uS4 (206 aa).

One can recognise an S4 RNA-binding domain in the interval Gly96–Lys156.

This sequence belongs to the universal ribosomal protein uS4 family. In terms of assembly, part of the 30S ribosomal subunit. Contacts protein S5. The interaction surface between S4 and S5 is involved in control of translational fidelity.

In terms of biological role, one of the primary rRNA binding proteins, it binds directly to 16S rRNA where it nucleates assembly of the body of the 30S subunit. Functionally, with S5 and S12 plays an important role in translational accuracy. The sequence is that of Small ribosomal subunit protein uS4 from Yersinia enterocolitica serotype O:8 / biotype 1B (strain NCTC 13174 / 8081).